The following is a 642-amino-acid chain: Myrosinase-binding protein 2 (642 aa).

4 Jacalin-type lectin domains span residues 2 to 151 (SEKV…HFFA), 156 to 291 (LKHF…HFAP), 334 to 477 (PNKV…YFAP), and 490 to 633 (SKKL…HAVP). The segment covering 296–334 (TPAPAPAPAPAPAPAPSPAPASAPVPAPAPTPAPAPAPP) has biased composition (pro residues). Disordered regions lie at residues 296–338 (TPAP…NKVE) and 479–499 (TNSTTPSTPSTSKKLQARGGN). Positions 479 to 490 (TNSTTPSTPSTS) are enriched in low complexity.

Belongs to the jacalin lectin family. As to expression, expressed in flowers. Detected mainly in ovules and styles of immature flowers, but also in pistils, styles, stamens, petals and embryos. Not detected in leaves.

The protein is Myrosinase-binding protein 2 (F-ATMBP) of Arabidopsis thaliana (Mouse-ear cress).